Here is a 734-residue protein sequence, read N- to C-terminus: Mechanosensitive ion channel protein 10 (734 aa).

2 disordered regions span residues 1-75 (MAEQ…LTQR) and 115-136 (SFSR…APVT). Residues 24–39 (EASRRSKEMASPESEK) show a composition bias toward basic and acidic residues. Phosphoserine is present on serine 34. 2 stretches are compositionally biased toward polar residues: residues 65 to 75 (PNQNNVGLTQR) and 117 to 129 (SRAS…NRSV). A phosphoserine mark is found at serine 128 and serine 131. 6 consecutive transmembrane segments (helical) span residues 164–184 (ISTL…ALVA), 196–216 (FWGL…SGML), 249–269 (SVQV…LFNH), 288–308 (LISI…LKIL), 516–536 (LVTA…LEVA), and 551–571 (LAFI…FVFV).

Belongs to the MscS (TC 1.A.23) family. Detected in the root tip and throughout the vasculature of the root and leaf.

It localises to the cell membrane. Functionally, mechanosensitive channel that opens in response to stretch forces in the membrane lipid bilayer. This Arabidopsis thaliana (Mouse-ear cress) protein is Mechanosensitive ion channel protein 10 (MSL10).